The sequence spans 198 residues: FMN-dependent NADH:quinone oxidoreductase (198 aa).

Residues S9 and M95–F98 contribute to the FMN site.

It belongs to the azoreductase type 1 family. As to quaternary structure, homodimer. FMN is required as a cofactor.

It catalyses the reaction 2 a quinone + NADH + H(+) = 2 a 1,4-benzosemiquinone + NAD(+). The enzyme catalyses N,N-dimethyl-1,4-phenylenediamine + anthranilate + 2 NAD(+) = 2-(4-dimethylaminophenyl)diazenylbenzoate + 2 NADH + 2 H(+). Its function is as follows. Quinone reductase that provides resistance to thiol-specific stress caused by electrophilic quinones. Also exhibits azoreductase activity. Catalyzes the reductive cleavage of the azo bond in aromatic azo compounds to the corresponding amines. This is FMN-dependent NADH:quinone oxidoreductase from Alcanivorax borkumensis (strain ATCC 700651 / DSM 11573 / NCIMB 13689 / SK2).